A 908-amino-acid polypeptide reads, in one-letter code: 5'-3' exoribonuclease 2 homolog (908 aa).

A CCHC-type zinc finger spans residues 263-280 (RPCDICNGFGHEMDKCVG). Disordered stretches follow at residues 409–457 (RQRR…VGNY) and 821–908 (GGNQ…YRRF). Positions 432-454 (HGSLNQSAFGASAVGPNSQQRSV) are enriched in polar residues. Serine 438 carries the phosphoserine modification. 2 stretches are compositionally biased toward low complexity: residues 825 to 868 (GQSY…HNQR) and 878 to 908 (QRNF…YRRF).

This sequence belongs to the 5'-3' exonuclease family. XRN2/RAT1 subfamily. In terms of assembly, interacts with cuff and Rai1; the interaction with cuff may inhibit its role in RNA degradation.

The protein localises to the nucleus. Functionally, a 5'-3' exoribonuclease. May promote the termination of transcription by RNA polymerase II and promote RNA degradation. Involved in turnover of piRNA precursors. The chain is 5'-3' exoribonuclease 2 homolog from Drosophila melanogaster (Fruit fly).